The chain runs to 549 residues: Putative lipase ATG15 (549 aa).

Residues 1 to 19 (MKQDLYKESSPPPSTTKSK) are Cytoplasmic-facing. Residues 20–42 (GLYVIVAALVTTAIYLLYSQGYS) traverse the membrane as a helical; Signal-anchor for type II membrane protein segment. Residues 43-549 (NTHGEKDMPS…SHTVTHVTMA (507 aa)) lie on the Lumenal side of the membrane. Residues N204 and N315 are each glycosylated (N-linked (GlcNAc...) asparagine). The Charge relay system role is filled by S331. The N-linked (GlcNAc...) asparagine glycan is linked to N448. The interval 474–510 (DDDDKDKKKKKKTSTSSSVVSKTKTSTSSTVATNTMP) is disordered. Over residues 487–504 (STSSSVVSKTKTSTSSTV) the composition is skewed to low complexity.

Belongs to the AB hydrolase superfamily. Lipase family. As to quaternary structure, binds to both phosphatidylinositol (PI) and phosphatidylinositol 3,5-bisphosphate (PIP2).

The protein localises to the endosome. The protein resides in the multivesicular body membrane. Its subcellular location is the prevacuolar compartment membrane. The catalysed reaction is a triacylglycerol + H2O = a diacylglycerol + a fatty acid + H(+). In terms of biological role, lipase which is essential for lysis of subvacuolar cytoplasm to vacuole targeted bodies and intravacuolar autophagic bodies. Involved in the lysis of intravacuolar multivesicular body (MVB) vesicles. The intravacuolar membrane disintegration by ATG15 is critical to life span extension. The sequence is that of Putative lipase ATG15 (ATG15) from Yarrowia lipolytica (strain CLIB 122 / E 150) (Yeast).